A 77-amino-acid polypeptide reads, in one-letter code: Metallothionein-like protein 2 (77 aa).

The protein belongs to the metallothionein superfamily. Type 15 family.

Functionally, metallothioneins have a high content of cysteine residues that bind various heavy metals. The chain is Metallothionein-like protein 2 (MT1A) from Trifolium repens (Creeping white clover).